We begin with the raw amino-acid sequence, 316 residues long: Ferrochelatase (316 aa).

The Fe cation site is built by His190 and Glu271.

Belongs to the ferrochelatase family.

It is found in the cytoplasm. The catalysed reaction is heme b + 2 H(+) = protoporphyrin IX + Fe(2+). The protein operates within porphyrin-containing compound metabolism; protoheme biosynthesis; protoheme from protoporphyrin-IX: step 1/1. In terms of biological role, catalyzes the ferrous insertion into protoporphyrin IX. The polypeptide is Ferrochelatase (Sulfurimonas denitrificans (strain ATCC 33889 / DSM 1251) (Thiomicrospira denitrificans (strain ATCC 33889 / DSM 1251))).